Reading from the N-terminus, the 358-residue chain is Dynein axonemal assembly factor 10 (358 aa).

6 WD repeats span residues 64 to 106, 116 to 155, 163 to 206, 208 to 250, 258 to 298, and 320 to 358; these read EKPK…TPVY, NCID…TPVA, EAKR…VRWE, NIKN…PTKG, AHKS…QRSR, and LSTQ…LNRL.

As to quaternary structure, interacts with PIH1D1; the interaction associates DNAAF10 with the R2TP complex. Interacts with several dynein axonemal assembly factors.

The protein resides in the dynein axonemal particle. Functionally, key assembly factor specifically required for the stability of axonemal dynein heavy chains in cytoplasm. This Xenopus laevis (African clawed frog) protein is Dynein axonemal assembly factor 10 (dnaaf10).